The following is a 71-amino-acid chain: KTVAGFCIFFLVLFLAQEGVVKTEAKLCNHLADTYRGPCFTNASCDDHCKNKEHFVSGTCMKMACWCAHNC.

The signal sequence occupies residues 1-25 (KTVAGFCIFFLVLFLAQEGVVKTEA). 3 disulfide bridges follow: C28/C71, C39/C60, and C45/C65.

Belongs to the DEFL family. May form dimers. Not glycosylated. Post-translationally, contains 4 disulfide bonds. In terms of processing, met-61 and Met-63 might be oxidized in some molecules.

Functionally, probably has antifungal activity. The protein is Defensin 1 of Arachis hypogaea (Peanut).